Reading from the N-terminus, the 279-residue chain is Alcohol dehydrogenase-related 31 kDa protein (279 aa).

Position 11 to 34 (11 to 34) interacts with NAD(+); the sequence is YVADCGGIALETSKVLMTKNIAKL. Ser139 provides a ligand contact to substrate. The Proton acceptor role is filled by Tyr152.

Belongs to the short-chain dehydrogenases/reductases (SDR) family.

In Drosophila guanche (Fruit fly), this protein is Alcohol dehydrogenase-related 31 kDa protein (Adhr).